The sequence spans 194 residues: Imidazoleglycerol-phosphate dehydratase (194 aa).

Belongs to the imidazoleglycerol-phosphate dehydratase family.

It localises to the cytoplasm. It carries out the reaction D-erythro-1-(imidazol-4-yl)glycerol 3-phosphate = 3-(imidazol-4-yl)-2-oxopropyl phosphate + H2O. It functions in the pathway amino-acid biosynthesis; L-histidine biosynthesis; L-histidine from 5-phospho-alpha-D-ribose 1-diphosphate: step 6/9. This Lacticaseibacillus paracasei (strain ATCC 334 / BCRC 17002 / CCUG 31169 / CIP 107868 / KCTC 3260 / NRRL B-441) (Lactobacillus paracasei) protein is Imidazoleglycerol-phosphate dehydratase.